Reading from the N-terminus, the 114-residue chain is Small ribosomal subunit protein uS17 (114 aa).

The protein belongs to the universal ribosomal protein uS17 family. As to quaternary structure, part of the 30S ribosomal subunit.

One of the primary rRNA binding proteins, it binds specifically to the 5'-end of 16S ribosomal RNA. In Sulfolobus acidocaldarius (strain ATCC 33909 / DSM 639 / JCM 8929 / NBRC 15157 / NCIMB 11770), this protein is Small ribosomal subunit protein uS17.